We begin with the raw amino-acid sequence, 1065 residues long: Ceruloplasmin (1065 aa).

An N-terminal signal peptide occupies residues 1–19 (MKILILGIFLFLCSTPAWA). Plastocyanin-like domains lie at 20 to 200 (KEKH…LIIC) and 209 to 357 (KEKH…VQEC). Residues Tyr55, Gly64, and Tyr67 each coordinate Na(+). 2 residues coordinate Cu(2+): His120 and His122. His120 serves as a coordination point for O2. Residue Lys128 coordinates Ca(2+). An N-linked (GlcNAc...) (complex) asparagine glycan is attached at Asn138. Residues Gln143, Asp146, and Asp147 each coordinate Ca(2+). Residues Cys174 and Cys200 are joined by a disulfide bond. Cu(2+)-binding residues include His180 and His182. His180 is an O2 binding site. Residue Ser256 participates in Na(+) binding. The cysteines at positions 276 and 357 are disulfide-linked. Positions 295, 338, and 343 each coordinate Cu(2+). Asn358 and Asn397 each carry an N-linked (GlcNAc...) (complex) asparagine glycan. Plastocyanin-like domains lie at 370-560 (HVRH…MKIC) and 570-718 (RQKD…VNQC). Positions 408, 417, and 420 each coordinate Na(+). The cysteines at positions 534 and 560 are disulfide-linked. A glycan (N-linked (GlcNAc...) asparagine) is linked at Asn588. Ser617 contributes to the Na(+) binding site. Cys637 and Cys718 are joined by a disulfide. The Cu(2+) site is built by His656, Cys699, His704, and Met709. The active-site Nucleophile; for glutathione peroxidase activity is the Cys699. The residue at position 722 (Ser722) is a Phosphoserine; by FAM20C. 2 consecutive Plastocyanin-like domains span residues 730 to 900 (GERT…LIVC) and 908 to 1061 (FNPR…QNED). N-linked (GlcNAc...) (complex) asparagine glycosylation is present at Asn762. Na(+)-binding residues include Phe767, Gly776, and Tyr779. Cys874 and Cys900 are disulfide-bonded. An N-linked (GlcNAc...) asparagine glycan is attached at Asn926. Na(+) is bound at residue Ser955. Residues His994, His997, His999, His1039, Cys1040, His1041, His1045, and Met1050 each contribute to the Cu(2+) site. O2 is bound by residues His997 and His999. His1041 provides a ligand contact to O2.

Belongs to the multicopper oxidase family. As to quaternary structure, found in a complex with MPO and LTF; interacts directly with MPO and LTF, which allows Fe(3+) incorporation into LTF, activation of CP ferroxidase activity and protection of CP antioxidant properties by MPO. Cu(2+) serves as cofactor. Expressed by the liver and secreted in plasma.

Its subcellular location is the secreted. It catalyses the reaction 4 Fe(2+) + O2 + 4 H(+) = 4 Fe(3+) + 2 H2O. The catalysed reaction is 4 Cu(+) + O2 + 4 H(+) = 4 Cu(2+) + 2 H2O. It carries out the reaction a hydroperoxide + 2 glutathione = an alcohol + glutathione disulfide + H2O. The enzyme catalyses 4 nitric oxide + O2 + 2 H2O = 4 nitrite + 4 H(+). It catalyses the reaction 2 glutathione + H2O2 = glutathione disulfide + 2 H2O. In terms of biological role, multifunctional blue, copper-binding (6-7 atoms per molecule) glycoprotein. It has ferroxidase activity oxidizing Fe(2+) to Fe(3+) without releasing radical oxygen species. It is involved in iron transport across the cell membrane. Copper ions provide a large number of enzymatic activites. Oxidizes highly toxic ferrous ions to the ferric state for further incorporation onto apo-transferrins, catalyzes Cu(+) oxidation and promotes the oxidation of biogenic amines such as norepinephrin and serotonin. Provides Cu(2+) ions for the ascorbate-mediated deaminase degradation of the heparan sulfate chains of GPC1. Has glutathione peroxidase-like activity, can remove both hydrogen peroxide and lipid hydroperoxide in the presence of thiols. Also shows NO-oxidase and NO2 synthase activities that determine endocrine NO homeostasis. This Homo sapiens (Human) protein is Ceruloplasmin.